The primary structure comprises 50 residues: LHYQEVKWRKLGSYEHRLHLKPGRLAKHELEVFNGYFVHFPAPENMIPIG.

The protein belongs to the ITIH family. As to quaternary structure, I-alpha-I plasma protease inhibitors are assembled from one or two heavy chains (HC) and one light chain, bikunin. Inter-alpha-inhibitor (I-alpha-I) is composed of ITIH1/HC1, ITIH2/HC2 and bikunin. In terms of processing, phosphorylated by FAM20C in the extracellular medium.

It is found in the secreted. In terms of biological role, may act as a carrier of hyaluronan in serum or as a binding protein between hyaluronan and other matrix protein, including those on cell surfaces in tissues to regulate the localization, synthesis and degradation of hyaluronan which are essential to cells undergoing biological processes. The sequence is that of Inter-alpha-trypsin inhibitor heavy chain H2 (ITIH2) from Bos taurus (Bovine).